A 122-amino-acid polypeptide reads, in one-letter code: Large ribosomal subunit protein uL14 (122 aa).

This sequence belongs to the universal ribosomal protein uL14 family. As to quaternary structure, part of the 50S ribosomal subunit. Forms a cluster with proteins L3 and L19. In the 70S ribosome, L14 and L19 interact and together make contacts with the 16S rRNA in bridges B5 and B8.

Its function is as follows. Binds to 23S rRNA. Forms part of two intersubunit bridges in the 70S ribosome. This is Large ribosomal subunit protein uL14 from Borreliella burgdorferi (strain ATCC 35210 / DSM 4680 / CIP 102532 / B31) (Borrelia burgdorferi).